We begin with the raw amino-acid sequence, 262 residues long: Orotidine 5'-phosphate decarboxylase (262 aa).

Residues Asp35, 57 to 59, 89 to 98, Tyr215, and Arg233 each bind substrate; these read KTH and DRKFADIGNT. Residue Lys91 is the Proton donor of the active site.

It belongs to the OMP decarboxylase family.

The enzyme catalyses orotidine 5'-phosphate + H(+) = UMP + CO2. Its pathway is pyrimidine metabolism; UMP biosynthesis via de novo pathway; UMP from orotate: step 2/2. The sequence is that of Orotidine 5'-phosphate decarboxylase (URA3) from Pichia kudriavzevii (Yeast).